Reading from the N-terminus, the 452-residue chain is Bifunctional protein GlmU (452 aa).

The interval 1 to 226 (MVAVAILAAG…SQEILGINDR (226 aa)) is pyrophosphorylase. UDP-N-acetyl-alpha-D-glucosamine-binding positions include 7–10 (LAAG), Lys-21, Gln-73, and 78–79 (GT). Mg(2+) is bound at residue Asp-103. 4 residues coordinate UDP-N-acetyl-alpha-D-glucosamine: Gly-140, Glu-155, Asn-170, and Asn-224. Residue Asn-224 participates in Mg(2+) binding. The linker stretch occupies residues 227–247 (LQLADSFRILQERIRQQWMLA). The N-acetyltransferase stretch occupies residues 248 to 452 (GVTLVDPTSI…ENWSTPTTEQ (205 aa)). Residues Arg-329 and Lys-347 each contribute to the UDP-N-acetyl-alpha-D-glucosamine site. His-359 acts as the Proton acceptor in catalysis. UDP-N-acetyl-alpha-D-glucosamine contacts are provided by Tyr-362 and Asn-373. Acetyl-CoA-binding positions include Ala-376, 382–383 (NY), Ala-419, and Arg-436.

It in the N-terminal section; belongs to the N-acetylglucosamine-1-phosphate uridyltransferase family. This sequence in the C-terminal section; belongs to the transferase hexapeptide repeat family. In terms of assembly, homotrimer. The cofactor is Mg(2+).

It is found in the cytoplasm. The catalysed reaction is alpha-D-glucosamine 1-phosphate + acetyl-CoA = N-acetyl-alpha-D-glucosamine 1-phosphate + CoA + H(+). It carries out the reaction N-acetyl-alpha-D-glucosamine 1-phosphate + UTP + H(+) = UDP-N-acetyl-alpha-D-glucosamine + diphosphate. It functions in the pathway nucleotide-sugar biosynthesis; UDP-N-acetyl-alpha-D-glucosamine biosynthesis; N-acetyl-alpha-D-glucosamine 1-phosphate from alpha-D-glucosamine 6-phosphate (route II): step 2/2. The protein operates within nucleotide-sugar biosynthesis; UDP-N-acetyl-alpha-D-glucosamine biosynthesis; UDP-N-acetyl-alpha-D-glucosamine from N-acetyl-alpha-D-glucosamine 1-phosphate: step 1/1. Its pathway is bacterial outer membrane biogenesis; LPS lipid A biosynthesis. Catalyzes the last two sequential reactions in the de novo biosynthetic pathway for UDP-N-acetylglucosamine (UDP-GlcNAc). The C-terminal domain catalyzes the transfer of acetyl group from acetyl coenzyme A to glucosamine-1-phosphate (GlcN-1-P) to produce N-acetylglucosamine-1-phosphate (GlcNAc-1-P), which is converted into UDP-GlcNAc by the transfer of uridine 5-monophosphate (from uridine 5-triphosphate), a reaction catalyzed by the N-terminal domain. The polypeptide is Bifunctional protein GlmU (Synechococcus sp. (strain ATCC 27144 / PCC 6301 / SAUG 1402/1) (Anacystis nidulans)).